The chain runs to 491 residues: Protein nucleotidyltransferase YdiU (491 aa).

8 residues coordinate ATP: Gly-94, Gly-96, Arg-97, Lys-117, Asp-129, Gly-130, Arg-180, and Arg-187. Residue Asp-256 is the Proton acceptor of the active site. 2 residues coordinate Mg(2+): Asn-257 and Asp-266. Asp-266 lines the ATP pocket.

This sequence belongs to the SELO family. Requires Mg(2+) as cofactor. Mn(2+) serves as cofactor.

The catalysed reaction is L-seryl-[protein] + ATP = 3-O-(5'-adenylyl)-L-seryl-[protein] + diphosphate. It catalyses the reaction L-threonyl-[protein] + ATP = 3-O-(5'-adenylyl)-L-threonyl-[protein] + diphosphate. The enzyme catalyses L-tyrosyl-[protein] + ATP = O-(5'-adenylyl)-L-tyrosyl-[protein] + diphosphate. It carries out the reaction L-histidyl-[protein] + UTP = N(tele)-(5'-uridylyl)-L-histidyl-[protein] + diphosphate. The catalysed reaction is L-seryl-[protein] + UTP = O-(5'-uridylyl)-L-seryl-[protein] + diphosphate. It catalyses the reaction L-tyrosyl-[protein] + UTP = O-(5'-uridylyl)-L-tyrosyl-[protein] + diphosphate. Its function is as follows. Nucleotidyltransferase involved in the post-translational modification of proteins. It can catalyze the addition of adenosine monophosphate (AMP) or uridine monophosphate (UMP) to a protein, resulting in modifications known as AMPylation and UMPylation. This is Protein nucleotidyltransferase YdiU from Clostridium botulinum (strain Eklund 17B / Type B).